The following is a 117-amino-acid chain: Hainantoxin-XV-4 (117 aa).

An N-terminal signal peptide occupies residues 1–20 (MKLCAVIIASLLVCVAVASS). The segment at 20–55 (SSDNQKEFAQEKEMTREETQSLGEHEKDDEVTGSEE) is disordered. A propeptide spanning residues 21–56 (SDNQKEFAQEKEMTREETQSLGEHEKDDEVTGSEER) is cleaved from the precursor. Residues 23–55 (NQKEFAQEKEMTREETQSLGEHEKDDEVTGSEE) show a composition bias toward basic and acidic residues. Intrachain disulfides connect Cys58-Cys72, Cys65-Cys78, Cys69-Cys115, and Cys71-Cys91.

The protein belongs to the neurotoxin 03 (Tx2) family. 02 subfamily. HNTX-XV sub-subfamily. In terms of tissue distribution, expressed by the venom gland.

It is found in the secreted. Functionally, putative ion channel inhibitor. The protein is Hainantoxin-XV-4 of Cyriopagopus hainanus (Chinese bird spider).